Here is a 715-residue protein sequence, read N- to C-terminus: Palmitoyltransferase ZDHHC5 (715 aa).

The Cytoplasmic segment spans residues 1 to 13 (MPAESGKRFKPSK). A helical transmembrane segment spans residues 14 to 34 (YVPVSAAAIFLVGATTLFFAF). Topologically, residues 35-52 (TCPGLSLNVSPAVPIYNA) are extracellular. The helical transmembrane segment at 53–73 (IMFLFVLANFSMATFMDPGIF) threads the bilayer. Residues 74–148 (PRAEEDEDKE…NCIGRRNYRY (75 aa)) lie on the Cytoplasmic side of the membrane. Tyr91 carries the post-translational modification Phosphotyrosine. Positions 104–154 (KWCATCRFYRPPRCSHCSVCDNCVEEFDHHCPWVNNCIGRRNYRYFFLFLL) constitute a DHHC domain. The active-site S-palmitoyl cysteine intermediate is Cys134. The chain crosses the membrane as a helical span at residues 149-169 (FFLFLLSLTAHIMGVFGFGLL). Residues 170–191 (YVLYHIEELSGVRTAVTMAVMC) lie on the Extracellular side of the membrane. The chain crosses the membrane as a helical span at residues 192–212 (VAGLFFIPVAGLTGFHVVLVA). Over 213–715 (RGRTTNEQVT…VGGTTYEISV (503 aa)) the chain is Cytoplasmic. Ser247 carries the post-translational modification Phosphoserine. The segment at 289-715 (GELRRTKSKG…VGGTTYEISV (427 aa)) is disordered. A Phosphothreonine modification is found at Thr294. 2 positions are modified to phosphoserine: Ser296 and Ser299. Thr303 is modified (phosphothreonine). Residue Ser345 is modified to Phosphoserine. A phosphothreonine mark is found at Thr348 and Thr350. Residues 359–373 (SSSSTSAAMPHSSSA) show a composition bias toward low complexity. 4 positions are modified to phosphoserine: Ser380, Ser398, Ser406, and Ser409. Thr411 is subject to Phosphothreonine. Ser415, Ser425, Ser429, and Ser432 each carry phosphoserine. Residues 422–432 (SSGSRSSSLKS) are compositionally biased toward low complexity. Thr436 is modified (phosphothreonine). Polar residues predominate over residues 442 to 478 (QLQSIRSEGTTSTSYKSLANQTRNGSLSYDSLLTPSD). Phosphoserine occurs at positions 529 and 554. Low complexity predominate over residues 581-597 (PRTSSSSDDSKRSPLSK). Position 617 is an omega-N-methylarginine (Arg617). Ser621 bears the Phosphoserine mark. Thr659 is modified (phosphothreonine). Residues 666–677 (LKTTYSKSNGQP) show a composition bias toward polar residues. Ser684 and Ser694 each carry phosphoserine. Arg697 is subject to Omega-N-methylarginine.

It belongs to the DHHC palmitoyltransferase family. ERF2/ZDHHC9 subfamily. In terms of processing, phosphorylation regulates association with endocytic proteins and its subcellular localization. Phosphorylation by LYN during fatty acid uptake leads to inactivation of the activity. Post-translationally, autopalmitoylated. Palmitoylation of the C-terminal tail regulates stimulation-dependent plasma membrane motility. Highly enriched in brain, detectable in liver and heart, and undetectable in most other tissues.

Its subcellular location is the cell membrane. It carries out the reaction L-cysteinyl-[protein] + hexadecanoyl-CoA = S-hexadecanoyl-L-cysteinyl-[protein] + CoA. Palmitoyltransferase that catalyzes the addition of palmitate onto various protein substrates such as CTNND2, CD36, GSDMD, NLRP3, NOD1, NOD2, STAT3 and S1PR1 thus plays a role in various biological processes including cell adhesion, inflammation, fatty acid uptake, bacterial sensing or cardiac functions. Plays an important role in the regulation of synapse efficacy by mediating palmitoylation of delta-catenin/CTNND2, thereby increasing synaptic delivery and surface stabilization of alpha-amino-3-hydroxy-5-methyl-4-isoxazole propionic acid receptors (AMPARs). Under basal conditions, remains at the synaptic membrane through FYN-mediated phosphorylation that prevents association with endocytic proteins. Neuronal activity enhances the internalization and trafficking of DHHC5 from spines to dendritic shafts where it palmitoylates delta-catenin/CTNND2. Regulates cell adhesion at the plasma membrane by palmitoylating GOLGA7B and DSG2. Plays a role in innate immune response by mediating the palmitoylation of NOD1 and NOD2 and their proper recruitment to the bacterial entry site and phagosomes. Also participates in fatty acid uptake by palmitoylating CD36 and thereby targeting it to the plasma membrane. Upon binding of fatty acids to CD36, gets phosphorylated by LYN leading to inactivation and subsequent CD36 caveolar endocytosis. Controls oligodendrocyte development by catalyzing STAT3 palmitoylation. Acts as a regulator of inflammatory response by mediating palmitoylation of NLRP3 and GSDMD. Palmitoylates NLRP3 to promote inflammasome assembly and activation. Activates pyroptosis by catalyzing palmitoylation of gasdermin-D (GSDMD), thereby promoting membrane translocation and pore formation of GSDMD. This chain is Palmitoyltransferase ZDHHC5 (Zdhhc5), found in Mus musculus (Mouse).